Reading from the N-terminus, the 324-residue chain is MARRGKKKGRPISGWVIFDKPKGMGSTEAVSKIKWLFSAEKAGHAGTLDPLASGMLPIALGEATKTVPYVMDGTKVYRFTVTWGEERSTDDLEGQPTKTSDKRPSREEVEALLPDYTGVISQVPPQFSAIKIDGERAYDLAREGETVEIPTREVEIDRLEIVGFPDADRTEFEVECSKGTYVRSLARDMGRDLGCYGHISDLRRVEVAPFTDEDMVTLAKLEAVWPPLPPKDEDGNVIEPAPRRDFSALDALVIDTGAALDCLPQVPLSDDQAQRVRLGNPVILRGRDAPLEADEACVTTRGKLLAIGYIEHGQFKPKRVFTAG.

The active-site Nucleophile is the Asp-49. The tract at residues 87–107 is disordered; that stretch reads RSTDDLEGQPTKTSDKRPSRE.

Belongs to the pseudouridine synthase TruB family. Type 1 subfamily.

The enzyme catalyses uridine(55) in tRNA = pseudouridine(55) in tRNA. Its function is as follows. Responsible for synthesis of pseudouridine from uracil-55 in the psi GC loop of transfer RNAs. This is tRNA pseudouridine synthase B from Brucella canis (strain ATCC 23365 / NCTC 10854 / RM-666).